The primary structure comprises 413 residues: Falstatin (413 aa).

The N-terminal stretch at methionine 1–cysteine 21 is a signal peptide. Positions leucine 284–tryptophan 294 match the BC loop; binds and inhibits the active site cavity of cysteine proteases motif. Composition is skewed to polar residues over residues isoleucine 325 to threonine 339 and asparagine 346 to histidine 360. Residues isoleucine 325 to glutamine 367 form a disordered region.

This sequence belongs to the protease inhibitor I71 family. Oligomer; probably composed of 10 monomers. Proteolytically cleaved.

Its subcellular location is the secreted. It is found in the cytoplasmic vesicle. The protein localises to the secretory vesicle. The protein resides in the microneme. It localises to the parasitophorous vacuole lumen. Its subcellular location is the host cytoplasm. In terms of biological role, cysteine protease inhibitor. Inhibits cysteine protease falcipains FP2 and FP3. Required for the invasion of host erythrocytes by merozoites. In the mosquito vector, essential for the gliding motility of hemocoel sporozoites and, therefore, for salivary gland invasion and the subsequent transmission from the mosquito to the mammalian host. Required for the invasion of host hepatocytes. During the liver stage, may prevent host hepatocyte cell death likely by inhibiting host cysteine proteases. This chain is Falstatin, found in Plasmodium falciparum (isolate 3D7).